Here is a 341-residue protein sequence, read N- to C-terminus: tRNA N6-adenosine threonylcarbamoyltransferase (341 aa).

Residues His-111 and His-115 each contribute to the Fe cation site. Substrate-binding positions include 134–138 (LVSGG), Asp-167, Gly-180, and Asn-276. Residue Asp-304 participates in Fe cation binding.

This sequence belongs to the KAE1 / TsaD family. Fe(2+) is required as a cofactor.

Its subcellular location is the cytoplasm. The enzyme catalyses L-threonylcarbamoyladenylate + adenosine(37) in tRNA = N(6)-L-threonylcarbamoyladenosine(37) in tRNA + AMP + H(+). Functionally, required for the formation of a threonylcarbamoyl group on adenosine at position 37 (t(6)A37) in tRNAs that read codons beginning with adenine. Is involved in the transfer of the threonylcarbamoyl moiety of threonylcarbamoyl-AMP (TC-AMP) to the N6 group of A37, together with TsaE and TsaB. TsaD likely plays a direct catalytic role in this reaction. In Alteromonas mediterranea (strain DSM 17117 / CIP 110805 / LMG 28347 / Deep ecotype), this protein is tRNA N6-adenosine threonylcarbamoyltransferase.